The following is a 986-amino-acid chain: Bifunctional glutamine synthetase adenylyltransferase/adenylyl-removing enzyme (986 aa).

Positions 1-482 (MVTTVISNVK…RYGRLFAGEE (482 aa)) are adenylyl removase. The adenylyl transferase stretch occupies residues 486-986 (SRFGSLVFTG…RAAYEAVVKG (501 aa)).

Belongs to the GlnE family. Mg(2+) is required as a cofactor.

The catalysed reaction is [glutamine synthetase]-O(4)-(5'-adenylyl)-L-tyrosine + phosphate = [glutamine synthetase]-L-tyrosine + ADP. It catalyses the reaction [glutamine synthetase]-L-tyrosine + ATP = [glutamine synthetase]-O(4)-(5'-adenylyl)-L-tyrosine + diphosphate. Functionally, involved in the regulation of glutamine synthetase GlnA, a key enzyme in the process to assimilate ammonia. When cellular nitrogen levels are high, the C-terminal adenylyl transferase (AT) inactivates GlnA by covalent transfer of an adenylyl group from ATP to specific tyrosine residue of GlnA, thus reducing its activity. Conversely, when nitrogen levels are low, the N-terminal adenylyl removase (AR) activates GlnA by removing the adenylyl group by phosphorolysis, increasing its activity. The regulatory region of GlnE binds the signal transduction protein PII (GlnB) which indicates the nitrogen status of the cell. The protein is Bifunctional glutamine synthetase adenylyltransferase/adenylyl-removing enzyme of Caulobacter vibrioides (strain ATCC 19089 / CIP 103742 / CB 15) (Caulobacter crescentus).